Here is a 745-residue protein sequence, read N- to C-terminus: Elongation factor G, mitochondrial (745 aa).

The region spanning Glu40–Gly317 is the tr-type G domain. GTP contacts are provided by residues Ala49–Thr56, Asp116–His120, and Asn170–Asp173.

This sequence belongs to the TRAFAC class translation factor GTPase superfamily. Classic translation factor GTPase family. EF-G/EF-2 subfamily.

The protein resides in the mitochondrion. Its pathway is protein biosynthesis; polypeptide chain elongation. In terms of biological role, mitochondrial GTPase that catalyzes the GTP-dependent ribosomal translocation step during translation elongation. During this step, the ribosome changes from the pre-translocational (PRE) to the post-translocational (POST) state as the newly formed A-site-bound peptidyl-tRNA and P-site-bound deacylated tRNA move to the P and E sites, respectively. Catalyzes the coordinated movement of the two tRNA molecules, the mRNA and conformational changes in the ribosome. Essential during development as it acts as a retrograde signal from mitochondria to the nucleus to slow down cell proliferation if mitochondrial energy output is low. This Drosophila erecta (Fruit fly) protein is Elongation factor G, mitochondrial.